Reading from the N-terminus, the 198-residue chain is Dual specificity protein phosphatase 13B (198 aa).

The Tyrosine-protein phosphatase domain maps to 45–193; it reads HIDEVWPSLF…LQVLDNRLGR (149 aa). Cys-138 (phosphocysteine intermediate) is an active-site residue.

It belongs to the protein-tyrosine phosphatase family. Non-receptor class dual specificity subfamily. As to expression, highly expressed in the testis (at protein level). Also found in the skeletal muscle.

The enzyme catalyses O-phospho-L-tyrosyl-[protein] + H2O = L-tyrosyl-[protein] + phosphate. The catalysed reaction is O-phospho-L-seryl-[protein] + H2O = L-seryl-[protein] + phosphate. It carries out the reaction O-phospho-L-threonyl-[protein] + H2O = L-threonyl-[protein] + phosphate. Dual specificity phosphatase that dephosphorylates MAPK8/JNK and MAPK14/p38, but not MAPK1/ERK2, in vitro. Exhibits intrinsic phosphatase activity towards both phospho-seryl/threonyl and -tyrosyl residues, with similar specific activities in vitro. This chain is Dual specificity protein phosphatase 13B, found in Homo sapiens (Human).